Reading from the N-terminus, the 441-residue chain is Ribulose bisphosphate carboxylase large chain (441 aa).

At lysine 4 the chain carries N6,N6,N6-trimethyllysine. The substrate site is built by asparagine 113 and threonine 163. The active-site Proton acceptor is the lysine 165. Lysine 167 contacts substrate. Mg(2+) is bound by residues lysine 191, aspartate 193, and glutamate 194. Residue lysine 191 is modified to N6-carboxylysine. Catalysis depends on histidine 284, which acts as the Proton acceptor. Positions 285, 317, and 369 each coordinate substrate.

This sequence belongs to the RuBisCO large chain family. Type I subfamily. In terms of assembly, heterohexadecamer of 8 large chains and 8 small chains; disulfide-linked. The disulfide link is formed within the large subunit homodimers. Mg(2+) is required as a cofactor. The disulfide bond which can form in the large chain dimeric partners within the hexadecamer appears to be associated with oxidative stress and protein turnover.

It is found in the plastid. Its subcellular location is the chloroplast. It catalyses the reaction 2 (2R)-3-phosphoglycerate + 2 H(+) = D-ribulose 1,5-bisphosphate + CO2 + H2O. The catalysed reaction is D-ribulose 1,5-bisphosphate + O2 = 2-phosphoglycolate + (2R)-3-phosphoglycerate + 2 H(+). Functionally, ruBisCO catalyzes two reactions: the carboxylation of D-ribulose 1,5-bisphosphate, the primary event in carbon dioxide fixation, as well as the oxidative fragmentation of the pentose substrate in the photorespiration process. Both reactions occur simultaneously and in competition at the same active site. This is Ribulose bisphosphate carboxylase large chain from Heliamphora nutans (Venezuelan marsh pitcher plant).